The sequence spans 329 residues: Beta-tectorin (329 aa).

The N-terminal stretch at 1–17 (MVAVTVYLMVILAQAFA) is a signal peptide. Residues 19 to 287 (PCTPNKADVI…VTCDKRKQRM (269 aa)) form the ZP domain. 4 N-linked (GlcNAc...) asparagine glycosylation sites follow: Asn80, Asn104, Asn116, and Asn145. Cysteines 204 and 264 form a disulfide. A lipid anchor (GPI-anchor amidated glycine) is attached at Gly304. A propeptide spans 305–329 (LSRFYMLSDVIFHLLFAIGFCAILL) (removed in mature form).

May form homomeric filament after self-association or heteromeric filament after association with alpha-tectorin. In terms of processing, the N-terminus is blocked. Post-translationally, N-glycosylated. The presence of a hydrophobic C-terminus preceded by a potential cleavage site strongly suggests that tectorins are synthesized as glycosylphosphatidylinositol-linked, membrane-bound precursors. Tectorins are targeted to the apical surface of the inner ear epithelia by the lipid and proteolytically released into the extracellular compartment. In terms of tissue distribution, exclusively expressed in the inner ear, where it is found in basilar papilla, clear cells, supporting cells, cuboidal cells and the lagena macula.

The protein resides in the cell membrane. The protein localises to the secreted. It is found in the extracellular space. Its subcellular location is the extracellular matrix. Its function is as follows. One of the major non-collagenous components of the tectorial membrane. The tectorial membrane is an extracellular matrix of the inner ear that covers the neuroepithelium of the cochlea and contacts the stereocilia bundles of specialized sensory hair cells. Sound induces movement of these hair cells relative to the tectorial membrane, deflects the stereocilia and leads to fluctuations in hair-cell membrane potential, transducing sound into electrical signals. This chain is Beta-tectorin (TECTB), found in Gallus gallus (Chicken).